Reading from the N-terminus, the 213-residue chain is MTTCFVLASKSPARLRMLRSAGIEPVVIASGADESHLRGEDAVAMTARLSRLKAHSVIESGALEEYPADRMIVVACDSVLNLDGRILGKPHTAERARQWWRRMRGHQGVLVSGHHVAVIVNGQLREQTRIGQTVVTFADLTDAEIDAYVDSGEPAAVAGAFTIDGLGGAFITRINGDPHNVTGISLPLLRQMLMDLDVEWSSLWNGPKGGHLS.

D77 serves as the catalytic Proton acceptor.

This sequence belongs to the Maf family. A divalent metal cation serves as cofactor.

The protein resides in the cytoplasm. The enzyme catalyses a ribonucleoside 5'-triphosphate + H2O = a ribonucleoside 5'-phosphate + diphosphate + H(+). The catalysed reaction is a 2'-deoxyribonucleoside 5'-triphosphate + H2O = a 2'-deoxyribonucleoside 5'-phosphate + diphosphate + H(+). Functionally, nucleoside triphosphate pyrophosphatase. May have a dual role in cell division arrest and in preventing the incorporation of modified nucleotides into cellular nucleic acids. This is Nucleoside triphosphate pyrophosphatase from Cutibacterium acnes (strain DSM 16379 / KPA171202) (Propionibacterium acnes).